The sequence spans 130 residues: uncharacterized protein (130 aa).

This is an uncharacterized protein from Sputnik virophage.